The sequence spans 2696 residues: MSYSMVNASSAVSSPETAKNSDEPPPISSEAVNVLFPSVDPNSKLFRNSLNITISREAPPLTTSRIDFLSLFIFCKLTHWLSLNPSSHRDEEEEEASPFYPFTIVLTYQPGPGQSPWKEMASPLESLLSISGSVSTSSTLIRLRIFRHDIPEILQNSDMTSDIAPVIVDMIFQTLAIYDDRASRKAVDDLIVKGLGNVTFMKTFAAMLVQVMEKQLKFCFDTVCYRLLIWSCLLLEKSQFATVSKNAFVRVASTQASLLRIIMESSFRMRRACKRFMFHLFSQSQAIYSLYMDEVKGSRIPYKDSPELLGLLLEFSCSSPALFEQSKAIFVDIYVKDVLNSREKQKPNLSNCFKPLLQRLSHEEFQTVILPAAVKMLKRNPEIVLESVGFLLANVNIDLSKYALELLPVILPQARHTDEDRRLGALSMVMCLSEKSSNPDTIEAMFASVKAIIGGSEGRLQSPHQRIGMLNAVQELASAPEGKYIGSLSRTICSFLIACYKDEGNEDVKLSILSAVASWASRSSVAIQPNLVSFIAAGLKEKEALRRGHLRCVRIICRNPDTISQISDLLSPLIQLVKTGFTKAVQRLDGIYALLIVSKIAACDIKAEDTMVKEKLWTLISQNEPSLVQITLASKLSSDDCVVCVDLLEVLLVEHSSRVLEAFSLKSLSQLLLFLLCHPSWNVRKTAYNSVTKIFLATSQLATTLLDEFSDFLSITGDQIVSSRTSDADNPADHQAPFVPSVEVLVKALIVISSAAVAGPPSSWIVRAIFCSHHPSIVGTGKRDAVWKRLQKCLKTCGFDVATFLSTNGESVCKSLLGPMGLTSAKTPEQQAAVYSLSTMMSLAPEDTFTVFKMHLQDLPDRLSHDMLSETDIKIFHTPEGMLLSEQGVYVAQTIGAKYTKQEPSSNHSLKKGLASRETANSGRRDTAKLTKKADKGKTAKEEARELMLKEEASTRENVHRIQKSLSLVLHALGEMGLANPVFCHSQLPFLATFLDPLLRSPIVSAAAFENLVKLARCTVQPLCNWALEISTALRLIAIDEVDTSFDFRPSVDKAGKTYEGLFERIVNGLSISCKSGPLPVDTFTFIFPVLYHVLGVVPAYQASVGPALNELCLGLQADDVANALYGVYSKDVHVRLACLNAVKCIPAVSKCSLPQNVKIATNIWIALHDPEKSVAESADDLWARYGHDLGTDYSGIFKALSHINLNVRLAAAEALADALHESPSSIQLSLSTLFSLYIRDATSGEDVFDAGWIGRQGIALALQSAADVLTTKDLPAVMTFLISRALADPNTDVRGKMINAGIMIIDKHGKENVSLLFPIFENYLNKEASDEEEYDLVREGVVIFTGALAKHLARDDPKVHNVVEKLLEVLNTPSESVQRAVSTCLSPLVLSKQEEAPALFLRLLDKLMKSDKYGERRGAAFGLAGVVMGFGISSLKKYGLIVTLQEALIDRNSAKRREGALLAFECLCEKLGKLFEPYVIKMLPLLLVSFSDQVGAVREAAECAARAMMSQLSAYGVKLVLPSLLKGLEDKAWRTKQSSVQLLGAMAFCAPQQLSQCLPRVVPKLTEVFKTIQVLTDTHPKVQSAGQLALQQVGSVIKNPEISSLVPTLLLALTDPNEYTRHALDTLLQTTFVNSVDAPSLALLVPIVHRGLRERSSETKKKASQIVGNMCSLVTEPKDMIPYIGLLLPEVKKVLVDPIPEVRSVAARAVGSLIRGMGEDNFPDLVPWLFETLKSDTSNVERYGAAQGLSEVIAALGTDYFENILPDLIRHCSHQKASVRDGYLTLFKFLPRSLGAQFQKYLQLVLPAILDGLADENESVRDAALGAGHVLVEHHATTSLPLLLPAVEDGIFNDNWRIRQSSVELLGDLLFKVAGTSGKALLEGGSDDEGASTEAQGRAIIDILGMDKRNEVLAALYMVRTDVSLSVRQAALHVWKTIVANTPKTLKEIMPILMSTLISSLASPSSERRQVAGRSLGELVRKLGERVLPLIIPILSKGLKDPDVDKRQGVCIGLNEVMASAGRSQLLSFMDQLIPTIRTALCDSALEVRESAGLAFSTLYKSAGLQAMDEIIPTLLEALEDDEMSTTALDGLKQIISVRTAAVLPHILPKLVHLPLSALNAHALGALAEVAGAGFNTHLGTILPALLSAMGGENKEVQELAQEAAERVVLVIDEEGVETLLSELLKGVSDSQASIRRSSAYLIGYFFKSSKLYLIDEAPNMISTLIVMLSDSDSTTVAVSWEALARVIGSVPKEVLPSYIKLVRDAVSTARDKERRKRKGGYVVIPGLCLPKSLKPLLPVFLQGLISGSAELREQAAIGLGELIEVTSEQALKEFVIPITGPLIRIIGDRFPWQVKSAILATLIILIQRGGMALKPFLPQLQTTFVKCLQDSTRTIRSSAAVALGKLSALSTRIDPLVGDLMTSFQAADSGVREAILSAMRGVIKHAGKSIGPAVRVRIFDLLKDLMHHEDDQVRISATSMLGVLSQYLEAAQLSVLLQEVNDLSASQNWGARHGSVLCISSLLKHNPSTIMTSSLFSSMLNSLKSSLKDEKFPLRESSTKALGRLLLKQLATDPSNTKVVIDVLSSIVSALHDDSSEVRRRALSSLKAFAKDNPSATMANISVIGPPLAECLKDGNTPVRLAAERCALHVFQLTKGAENVQAAQKYITGLDARRLSKFPEQSDDSESDDDNVSG.

The segment covering 1–18 (MSYSMVNASSAVSSPETA) has biased composition (polar residues). A disordered region spans residues 1-26 (MSYSMVNASSAVSSPETAKNSDEPPP). HEAT repeat units lie at residues 162–204 (DIAP…MKTF), 253–290 (STQASLLRIIMESSFRMRRACKRFMFHLFSQSQAIYSL), 303–340 (KDSPELLGLLLEFSCSSPALFEQSKAIFVDIYVKDVLN), 364–400 (EFQTVILPAAVKMLKRNPEIVLESVGFLLANVNIDLS), 401–438 (KYALELLPVILPQARHTDEDRRLGALSMVMCLSEKSSN), 487–525 (SLSRTICSFLIACYKDEGNEDVKLSILSAVASWASRSSV), 526–562 (AIQPNLVSFIAAGLKEKEALRRGHLRCVRIICRNPDT), 564–601 (SQISDLLSPLIQLVKTGFTKAVQRLDGIYALLIVSKIA), and 642–677 (VVCVDLLEVLLVEHSSRVLEAFSLKSLSQLLLFLLC). The tract at residues 901 to 941 (KQEPSSNHSLKKGLASRETANSGRRDTAKLTKKADKGKTAK) is disordered. Over residues 923–941 (GRRDTAKLTKKADKGKTAK) the composition is skewed to basic and acidic residues. HEAT repeat units lie at residues 985-1021 (HSQLPFLATFLDPLLRSPIVSAAAFENLVKLARCTVQ), 1082-1118 (DTFTFIFPVLYHVLGVVPAYQASVGPALNELCLGLQA), 1188-1225 (HDLGTDYSGIFKALSHINLNVRLAAAEALADALHESPS), 1273-1311 (KDLPAVMTFLISRALADPNTDVRGKMINAGIMIIDKHGK), 1315-1355 (SLLF…HLAR), 1358-1395 (PKVHNVVEKLLEVLNTPSESVQRAVSTCLSPLVLSKQE), 1397-1433 (APALFLRLLDKLMKSDKYGERRGAAFGLAGVVMGFGI), 1436-1474 (LKKYGLIVTLQEALIDRNSAKRREGALLAFECLCEKLGK), 1478-1515 (PYVIKMLPLLLVSFSDQVGAVREAAECAARAMMSQLSA), 1516-1553 (YGVKLVLPSLLKGLEDKAWRTKQSSVQLLGAMAFCAPQ), 1564-1600 (PKLTEVFKTIQVLTDTHPKVQSAGQLALQQVGSVIKN), 1601-1638 (PEISSLVPTLLLALTDPNEYTRHALDTLLQTTFVNSVD), 1640-1677 (PSLALLVPIVHRGLRERSSETKKKASQIVGNMCSLVTE), 1683-1720 (PYIGLLLPEVKKVLVDPIPEVRSVAARAVGSLIRGMGE), 1722-1759 (NFPDLVPWLFETLKSDTSNVERYGAAQGLSEVIAALGT), 1761-1797 (YFENILPDLIRHCSHQKASVRDGYLTLFKFLPRSLGA), 1801-1838 (KYLQLVLPAILDGLADENESVRDAALGAGHVLVEHHAT), and 1840-1876 (SLPLLLPAVEDGIFNDNWRIRQSSVELLGDLLFKVAG). Position 1887 is a phosphoserine (Ser1887). HEAT repeat units follow at residues 1908-1945 (DKRNEVLAALYMVRTDVSLSVRQAALHVWKTIVANTPK), 1949-1986 (EIMPILMSTLISSLASPSSERRQVAGRSLGELVRKLGE), 1988-2024 (VLPLIIPILSKGLKDPDVDKRQGVCIGLNEVMASAGR), 2029-2066 (SFMDQLIPTIRTALCDSALEVRESAGLAFSTLYKSAGL), 2067-2102 (QAMDEIIPTLLEALEDDEMSTTALDGLKQIISVRTA), 2104-2137 (VLPHILPKLVHLPLSALNAHALGALAEVAGAGFN), 2138-2175 (THLGTILPALLSAMGGENKEVQELAQEAAERVVLVIDE), 2177-2213 (GVETLLSELLKGVSDSQASIRRSSAYLIGYFFKSSKL), 2217-2254 (DEAPNMISTLIVMLSDSDSTTVAVSWEALARVIGSVPK), 2258-2292 (PSYIKLVRDAVSTARDKERRKRKGGYVVIPGLCLP), 2293-2330 (KSLKPLLPVFLQGLISGSAELREQAAIGLGELIEVTSE), 2335-2373 (EFVIPITGPLIRIIGDRFPWQVKSAILATLIILIQRGGM), 2377-2414 (PFLPQLQTTFVKCLQDSTRTIRSSAAVALGKLSALSTR), 2416-2450 (DPLVGDLMTSFQAADSGVREAILSAMRGVIKHAGK), 2455-2492 (AVRVRIFDLLKDLMHHEDDQVRISATSMLGVLSQYLEA), 2494-2530 (QLSVLLQEVNDLSASQNWGARHGSVLCISSLLKHNPS), 2536-2573 (SLFSSMLNSLKSSLKDEKFPLRESSTKALGRLLLKQLA), 2580-2617 (KVVIDVLSSIVSALHDDSSEVRRRALSSLKAFAKDNPS), and 2620-2658 (MANISVIGPPLAECLKDGNTPVRLAAERCALHVFQLTKG).

The protein belongs to the GCN1 family.

Functionally, involved in immunity against bacterial infection and in non-host resistance. Required for embryo development. Required for systemic acquired resistance, but functions in an salicylic acid-independent manner. Required for bacterium-triggered stomatal closure response. The chain is Protein ILITYHIA from Arabidopsis thaliana (Mouse-ear cress).